Consider the following 2282-residue polypeptide: Zonadhesin (2282 aa).

MAM domains follow at residues 1–147 and 150–315; these read MFFA…PCGE and PQCV…TCHV. Over 1 to 2235 the chain is Extracellular; it reads MFFATGRASA…VLLPPKPDTS (2235 aa). Asn-112 and Asn-272 each carry an N-linked (GlcNAc...) asparagine glycan. Residues 315 to 498 form a 26 X approximate heptapeptide repeats (mucin-like domain) region; the sequence is VPVPPVIPIK…STTTTPSPTT (184 aa). The segment covering 333-356 has biased composition (low complexity); that stretch reads PTVPAEGTTEPPEGTIELPEGTTK. Residues 333–495 form a disordered region; it reads PTVPAEGTTE…TTLSTTTTPS (163 aa). Positions 360-369 are enriched in acidic residues; that stretch reads ETTELPEEIT. Residues 379 to 398 are compositionally biased toward pro residues; it reads TEPPTVPTEPPTVPTEPPTV. 2 stretches are compositionally biased toward low complexity: residues 399 to 420 and 427 to 495; these read PTEK…TSIP and PTEK…TTPS. Residues 501 to 550 form the TIL 1 domain; that stretch reads CPANAHYESCACPASCKHPKASCKPPCQPGCVCDPGLVFSNNSCIKASSC. Residues Asn-541 and Asn-569 are each glycosylated (N-linked (GlcNAc...) asparagine). The VWFC 1 domain maps to 551–605; that stretch reads PCLYNNNNYEPEAEWFSPNCTELCHCWPGGRIECQISQCKTHTKCQLKNGQYECQ. One can recognise a VWFD 1 domain in the interval 610–787; that stretch reads ATCFVYGDPH…WAQDEDKECQ (178 aa). 2 cysteine pairs are disulfide-bonded: Cys-612–Cys-747 and Cys-634–Cys-786. A TIL 2 domain is found at 881–934; sequence CPPNSRYSLCTSPCPKTCHTGYVGMPCPEQCLEGCECNPGFILSGLECVPSAQC. One can recognise a VWFC 2 domain in the interval 935 to 990; the sequence is GCLDPSRGYFKVGEQWFKSDCKQLCICEGSNQIRCQPWKCGPHEVCSQQSGIYGCH. The VWFD 2 domain maps to 995–1176; it reads ATCSASGDPH…LEEGSETGCF (182 aa). 2 disulfide bridges follow: Cys-997–Cys-1136 and Cys-1019–Cys-1175. Asn-1141, Asn-1259, Asn-1270, Asn-1355, Asn-1467, and Asn-1483 each carry an N-linked (GlcNAc...) asparagine glycan. Residues 1267–1322 form the TIL 3 domain; that stretch reads CPPNSSYSPCGSPCPGTCLSLNHPKDCPITLPCVEGCECQNGYILSGTSCVPLNQC. The VWFC 3 domain maps to 1323-1379; the sequence is GCTDFEGSYHLVRESWYTDNTCSRLCTCSLHNNITCRQTACKPGQQCWAVDGLLRCR. The VWFD 3 domain maps to 1384–1564; it reads GVCQVTGDSR…KDNNIDPNCQ (181 aa). Intrachain disulfides connect Cys-1386-Cys-1525 and Cys-1408-Cys-1563. The interval 1561–1588 is disordered; sequence PNCQKSQEGKGKPQEEQGPSGSSKKASC. Polar residues predominate over residues 1577–1586; that stretch reads QGPSGSSKKA. N-linked (GlcNAc...) asparagine glycosylation is present at Asn-1662. The TIL 4 domain maps to 1670 to 1726; sequence CPAYSTYTNCLPSCSPSCFDPDGRCEGARAPSSCAEGCTCQPGYVLSKNKCVAKDQC. Residues 1727–1782 enclose the VWFC 4 domain; it reads SCRDAQGGSIPSGKSWVSSGCSQKCACTEGSIQCRAFHCPSRSHCKLNSNGNSNCV. Residues 1787 to 1963 enclose the VWFD 4 domain; sequence DQCSIFGGPH…SWEVKTEDSV (177 aa). Cys-1789 and Cys-1926 are oxidised to a cystine. N-linked (GlcNAc...) asparagine glycosylation occurs at Asn-1997. In terms of domain architecture, TIL 5 spans 2076-2129; the sequence is CPANTVYQSCMTPCPESCANLAAPRDCEGPCVEGCASLPGYAFSGAQSLPLANC. One can recognise a VWFC 5 domain in the interval 2130–2184; that stretch reads GCTSNGIYYQLGHSFVTADCSQRCTCASSGVLLCEPFSCRPGESCTLGNLTRGCF. An N-linked (GlcNAc...) asparagine glycan is attached at Asn-2178. One can recognise an EGF-like domain in the interval 2185 to 2221; that stretch reads RESPCLRNPCQNDGRCREQGTSFTCECEPGYGGHLCT. 3 disulfide bridges follow: Cys-2189–Cys-2200, Cys-2194–Cys-2209, and Cys-2211–Cys-2220. The chain crosses the membrane as a helical span at residues 2236-2256; the sequence is NLVAILLGMLVSLVVTVPVLA. Residues 2257–2282 lie on the Cytoplasmic side of the membrane; the sequence is RKCVSRKRRRWREKTQSEPRSAPGRR.

As to quaternary structure, probably forms covalent oligomers.

It localises to the cell membrane. In terms of biological role, binds in a species-specific manner to the zona pellucida of the egg. May be involved in gamete recognition and/or signaling. The protein is Zonadhesin (ZAN) of Oryctolagus cuniculus (Rabbit).